We begin with the raw amino-acid sequence, 410 residues long: Benzene 1,2-dioxygenase system ferredoxin--NAD(+) reductase subunit (410 aa).

4–35 provides a ligand contact to FAD; sequence HVAIIGNGVAGFTTAQALRAEGYEGRISLIGE. 145–173 provides a ligand contact to NAD(+); the sequence is RLLIVGGGLIGCEVATTARKLGLSVTILE.

The protein belongs to the bacterial ring-hydroxylating dioxygenase ferredoxin reductase family. This dioxygenase system consists of four proteins: the two subunits of the hydroxylase component (BedC1 and BedC2), a ferredoxin (BedB) and a ferredoxin reductase (BedA). Requires FAD as cofactor.

The enzyme catalyses 2 reduced [2Fe-2S]-[ferredoxin] + NAD(+) + H(+) = 2 oxidized [2Fe-2S]-[ferredoxin] + NADH. Its pathway is aromatic compound metabolism; benzene degradation; catechol from benzene: step 1/2. Functionally, part of the electron transfer component of benzene 1,2-dioxygenase, transfers electrons from ferredoxin to NADH. The polypeptide is Benzene 1,2-dioxygenase system ferredoxin--NAD(+) reductase subunit (bedA) (Pseudomonas putida (Arthrobacter siderocapsulatus)).